The sequence spans 766 residues: 5-methyltetrahydropteroyltriglutamate--homocysteine methyltransferase (766 aa).

5-methyltetrahydropteroyltri-L-glutamate is bound by residues Arg23–Lys26 and Lys121. L-homocysteine is bound by residues Ile438–Ser440 and Glu491. L-methionine-binding positions include Ile438–Ser440 and Glu491. 5-methyltetrahydropteroyltri-L-glutamate contacts are provided by residues Arg522 to Cys523 and Trp568. Residue Asp606 participates in L-homocysteine binding. Asp606 contacts L-methionine. Glu612 provides a ligand contact to 5-methyltetrahydropteroyltri-L-glutamate. Zn(2+) contacts are provided by His648, Cys650, and Glu672. The active-site Proton donor is His701. Residue Cys733 coordinates Zn(2+).

The protein belongs to the vitamin-B12 independent methionine synthase family. Zn(2+) is required as a cofactor.

The enzyme catalyses 5-methyltetrahydropteroyltri-L-glutamate + L-homocysteine = tetrahydropteroyltri-L-glutamate + L-methionine. It functions in the pathway amino-acid biosynthesis; L-methionine biosynthesis via de novo pathway; L-methionine from L-homocysteine (MetE route): step 1/1. In terms of biological role, catalyzes the transfer of a methyl group from 5-methyltetrahydrofolate to homocysteine resulting in methionine formation. This chain is 5-methyltetrahydropteroyltriglutamate--homocysteine methyltransferase, found in Photobacterium profundum (strain SS9).